The following is a 436-amino-acid chain: Ribosome biogenesis protein WDR12 homolog (436 aa).

Residues 13–97 (VRVRFLTKLP…ERVLELEYVK (85 aa)) are ubiquitin-like (UBL) domain. WD repeat units lie at residues 109–147 (PHDD…THIL), 149–193 (GHSD…SVPK), 203–242 (GHTS…EDGD), 273–311 (GHTQ…ETWN), 313–353 (VSGK…TLAP), 359–399 (SHKS…PLAS), and 402–436 (SHKD…IEIV). Residues 240–262 (DGDTVSVKKRRTNSDSSGPEESL) are disordered.

The protein belongs to the WD repeat WDR12/YTM1 family.

The protein resides in the nucleus. It is found in the nucleolus. The protein localises to the nucleoplasm. Functionally, required for maturation of ribosomal RNAs and formation of the large ribosomal subunit. The chain is Ribosome biogenesis protein WDR12 homolog from Oryza sativa subsp. japonica (Rice).